The following is a 78-amino-acid chain: Protein SlyX homolog (78 aa).

This sequence belongs to the SlyX family.

This Xylella fastidiosa (strain 9a5c) protein is Protein SlyX homolog.